We begin with the raw amino-acid sequence, 435 residues long: Methylenetetrahydrofolate--tRNA-(uracil-5-)-methyltransferase TrmFO (435 aa).

10 to 15 (GAGLAG) lines the FAD pocket.

The protein belongs to the MnmG family. TrmFO subfamily. FAD serves as cofactor.

The protein resides in the cytoplasm. It carries out the reaction uridine(54) in tRNA + (6R)-5,10-methylene-5,6,7,8-tetrahydrofolate + NADH + H(+) = 5-methyluridine(54) in tRNA + (6S)-5,6,7,8-tetrahydrofolate + NAD(+). The catalysed reaction is uridine(54) in tRNA + (6R)-5,10-methylene-5,6,7,8-tetrahydrofolate + NADPH + H(+) = 5-methyluridine(54) in tRNA + (6S)-5,6,7,8-tetrahydrofolate + NADP(+). In terms of biological role, catalyzes the folate-dependent formation of 5-methyl-uridine at position 54 (M-5-U54) in all tRNAs. The chain is Methylenetetrahydrofolate--tRNA-(uracil-5-)-methyltransferase TrmFO from Halalkalibacterium halodurans (strain ATCC BAA-125 / DSM 18197 / FERM 7344 / JCM 9153 / C-125) (Bacillus halodurans).